Consider the following 200-residue polypeptide: MGDPKFHHKKYSTPRHPWEKDRIDEENKILVKYGLKNKREIWRSEAMLSSIRSQARYLRARLRASDANAQKQLERMIKRLSRYKILSDKATLDDVLSLTVENILDRRLQTIVFKKNLALSEKQARQLITHGHITVNGRRVTVPGMLVEAQYEDTIAYYENSPIANELHPIRQALLSPAERVKEEAEKEAAASEDGGEQDE.

Residues 106–170 form the S4 RNA-binding domain; it reads RRLQTIVFKK…SPIANELHPI (65 aa). The interval 178 to 200 is disordered; that stretch reads AERVKEEAEKEAAASEDGGEQDE. Residues 179 to 190 are compositionally biased toward basic and acidic residues; sequence ERVKEEAEKEAA.

This sequence belongs to the universal ribosomal protein uS4 family. As to quaternary structure, part of the 30S ribosomal subunit. Contacts protein S5. The interaction surface between S4 and S5 is involved in control of translational fidelity.

Its function is as follows. One of the primary rRNA binding proteins, it binds directly to 16S rRNA where it nucleates assembly of the body of the 30S subunit. In terms of biological role, with S5 and S12 plays an important role in translational accuracy. This chain is Small ribosomal subunit protein uS4, found in Thermoplasma volcanium (strain ATCC 51530 / DSM 4299 / JCM 9571 / NBRC 15438 / GSS1).